A 276-amino-acid chain; its full sequence is Large ribosomal subunit protein uL2 (276 aa).

A disordered region spans residues 223–276 (AVMNPVDHPHGGGEGKNSVGRKSPLTPWGKPALGIKTRGRKTSDKFIVRRRNEK). The span at 263–276 (KTSDKFIVRRRNEK) shows a compositional bias: basic and acidic residues.

The protein belongs to the universal ribosomal protein uL2 family. Part of the 50S ribosomal subunit. Forms a bridge to the 30S subunit in the 70S ribosome.

One of the primary rRNA binding proteins. Required for association of the 30S and 50S subunits to form the 70S ribosome, for tRNA binding and peptide bond formation. It has been suggested to have peptidyltransferase activity; this is somewhat controversial. Makes several contacts with the 16S rRNA in the 70S ribosome. This Fusobacterium nucleatum subsp. nucleatum (strain ATCC 25586 / DSM 15643 / BCRC 10681 / CIP 101130 / JCM 8532 / KCTC 2640 / LMG 13131 / VPI 4355) protein is Large ribosomal subunit protein uL2.